The chain runs to 118 residues: UPF0102 protein Arth_2474 (118 aa).

Belongs to the UPF0102 family.

This chain is UPF0102 protein Arth_2474, found in Arthrobacter sp. (strain FB24).